The following is a 173-amino-acid chain: Crossover junction endodeoxyribonuclease RuvC (173 aa).

Residues Asp8, Glu67, and Asp139 contribute to the active site. 3 residues coordinate Mg(2+): Asp8, Glu67, and Asp139.

The protein belongs to the RuvC family. Homodimer which binds Holliday junction (HJ) DNA. The HJ becomes 2-fold symmetrical on binding to RuvC with unstacked arms; it has a different conformation from HJ DNA in complex with RuvA. In the full resolvosome a probable DNA-RuvA(4)-RuvB(12)-RuvC(2) complex forms which resolves the HJ. The cofactor is Mg(2+).

It localises to the cytoplasm. The catalysed reaction is Endonucleolytic cleavage at a junction such as a reciprocal single-stranded crossover between two homologous DNA duplexes (Holliday junction).. In terms of biological role, the RuvA-RuvB-RuvC complex processes Holliday junction (HJ) DNA during genetic recombination and DNA repair. Endonuclease that resolves HJ intermediates. Cleaves cruciform DNA by making single-stranded nicks across the HJ at symmetrical positions within the homologous arms, yielding a 5'-phosphate and a 3'-hydroxyl group; requires a central core of homology in the junction. The consensus cleavage sequence is 5'-(A/T)TT(C/G)-3'. Cleavage occurs on the 3'-side of the TT dinucleotide at the point of strand exchange. HJ branch migration catalyzed by RuvA-RuvB allows RuvC to scan DNA until it finds its consensus sequence, where it cleaves and resolves the cruciform DNA. In Vibrio vulnificus (strain YJ016), this protein is Crossover junction endodeoxyribonuclease RuvC.